Here is a 715-residue protein sequence, read N- to C-terminus: Polyribonucleotide nucleotidyltransferase (715 aa).

The Mg(2+) site is built by D493 and D499. Residues P560–I619 form the KH domain. Positions G629–K697 constitute an S1 motif domain.

This sequence belongs to the polyribonucleotide nucleotidyltransferase family. Requires Mg(2+) as cofactor.

It is found in the cytoplasm. It catalyses the reaction RNA(n+1) + phosphate = RNA(n) + a ribonucleoside 5'-diphosphate. Functionally, involved in mRNA degradation. Catalyzes the phosphorolysis of single-stranded polyribonucleotides processively in the 3'- to 5'-direction. This chain is Polyribonucleotide nucleotidyltransferase, found in Burkholderia vietnamiensis (strain G4 / LMG 22486) (Burkholderia cepacia (strain R1808)).